Here is a 431-residue protein sequence, read N- to C-terminus: Ubiquitin-like modifier-activating enzyme 5 (431 aa).

ATP-binding residues include G92, D113, K136, N159, and N197. The Zn(2+) site is built by C239 and C242. The active-site Glycyl thioester intermediate is C263. Residues C316 and C321 each contribute to the Zn(2+) site. A disordered region spans residues 339 to 396; that stretch reads AKAKMEADASTTIDEGPLHDDNEWNISVVDDENEKDTTKAASSSDTLPEGLTRELPVA.

It belongs to the ubiquitin-activating E1 family. UBA5 subfamily.

In terms of biological role, E1-like enzyme which activates UFM1. The protein is Ubiquitin-like modifier-activating enzyme 5 of Arabidopsis thaliana (Mouse-ear cress).